A 262-amino-acid chain; its full sequence is (5R,7aS)-5-hydroxy-7a-methyl-1-oxo-2,3,5,6,7,7a-hexahydro-1H-indene-carboxyl-CoA reductase (262 aa).

7 residues coordinate NAD(+): aspartate 50, aspartate 77, valine 78, asparagine 104, tyrosine 170, lysine 174, and alanine 203. Tyrosine 170 functions as the Proton acceptor in the catalytic mechanism.

Belongs to the short-chain dehydrogenases/reductases (SDR) family.

The enzyme catalyses (5R,7aS)-5-hydroxy-7a-methyl-1-oxo-2,3,5,6,7,7a-hexahydro-1H-indene-carboxyl-CoA + NAD(+) = (7aS)-7a-methyl-1,5-dioxo-2,3,5,6,7,7a-hexahydro-1H-indene-carboxyl-CoA + NADH + H(+). The protein operates within steroid metabolism; cholesterol degradation. Its activity is regulated as follows. Requires the presence of IpdC. Its function is as follows. Involved in the final steps of cholesterol and steroid degradation. Probably catalyzes the oxidation of the 5-OH group of (5R,7aS)-5-hydroxy-7a-methyl-1-oxo-2,3,5,6,7,7a-hexahydro-1H-indene-carboxyl-CoA, leading to the formation of HIEC-CoA. The protein is (5R,7aS)-5-hydroxy-7a-methyl-1-oxo-2,3,5,6,7,7a-hexahydro-1H-indene-carboxyl-CoA reductase of Mycobacterium tuberculosis (strain ATCC 25618 / H37Rv).